The sequence spans 215 residues: uncharacterized protein (215 aa).

This is an uncharacterized protein from Escherichia coli (strain K12).